A 169-amino-acid polypeptide reads, in one-letter code: Large ribosomal subunit protein uL18 (169 aa).

Belongs to the universal ribosomal protein uL18 family. Part of the 50S ribosomal subunit. Contacts the 5S and 23S rRNAs.

In terms of biological role, this is one of the proteins that bind and probably mediate the attachment of the 5S RNA into the large ribosomal subunit, where it forms part of the central protuberance. The chain is Large ribosomal subunit protein uL18 from Methanothrix thermoacetophila (strain DSM 6194 / JCM 14653 / NBRC 101360 / PT) (Methanosaeta thermophila).